A 236-amino-acid polypeptide reads, in one-letter code: 15,16-dihydrobiliverdin:ferredoxin oxidoreductase (236 aa).

It belongs to the HY2 family.

It carries out the reaction 15,16-dihydrobiliverdin + oxidized 2[4Fe-4S]-[ferredoxin] = biliverdin IXalpha + reduced 2[4Fe-4S]-[ferredoxin] + 2 H(+). Its function is as follows. Catalyzes the two-electron reduction of biliverdin IX-alpha at the C15 methine bridge. This is 15,16-dihydrobiliverdin:ferredoxin oxidoreductase from Prochlorococcus marinus (strain AS9601).